The sequence spans 119 residues: Small ribosomal subunit protein bS6 (119 aa).

A disordered region spans residues 95–119 (AVTEPSPLAKGNEKREDRKESEDAE). The segment covering 105–119 (GNEKREDRKESEDAE) has biased composition (basic and acidic residues).

Belongs to the bacterial ribosomal protein bS6 family.

Binds together with bS18 to 16S ribosomal RNA. In Halorhodospira halophila (strain DSM 244 / SL1) (Ectothiorhodospira halophila (strain DSM 244 / SL1)), this protein is Small ribosomal subunit protein bS6.